Here is a 260-residue protein sequence, read N- to C-terminus: Pyridoxine 5'-phosphate synthase (260 aa).

N6 is a binding site for 3-amino-2-oxopropyl phosphate. A 1-deoxy-D-xylulose 5-phosphate-binding site is contributed by 8-9; the sequence is DH. R17 contacts 3-amino-2-oxopropyl phosphate. Residue H42 is the Proton acceptor of the active site. 1-deoxy-D-xylulose 5-phosphate-binding residues include R44 and H49. The active-site Proton acceptor is E69. T99 contacts 1-deoxy-D-xylulose 5-phosphate. H213 acts as the Proton donor in catalysis. 3-amino-2-oxopropyl phosphate-binding positions include G214 and 235–236; that span reads GQ.

This sequence belongs to the PNP synthase family. As to quaternary structure, homooctamer; tetramer of dimers.

The protein localises to the cytoplasm. The enzyme catalyses 3-amino-2-oxopropyl phosphate + 1-deoxy-D-xylulose 5-phosphate = pyridoxine 5'-phosphate + phosphate + 2 H2O + H(+). Its pathway is cofactor biosynthesis; pyridoxine 5'-phosphate biosynthesis; pyridoxine 5'-phosphate from D-erythrose 4-phosphate: step 5/5. Catalyzes the complicated ring closure reaction between the two acyclic compounds 1-deoxy-D-xylulose-5-phosphate (DXP) and 3-amino-2-oxopropyl phosphate (1-amino-acetone-3-phosphate or AAP) to form pyridoxine 5'-phosphate (PNP) and inorganic phosphate. The protein is Pyridoxine 5'-phosphate synthase of Sulfurimonas denitrificans (strain ATCC 33889 / DSM 1251) (Thiomicrospira denitrificans (strain ATCC 33889 / DSM 1251)).